The primary structure comprises 219 residues: tRNA (guanine-N(7)-)-methyltransferase (219 aa).

S-adenosyl-L-methionine contacts are provided by Glu46, Glu71, Asn100, and Asp122. Asp122 is a catalytic residue. Residues Lys126, Asp158, and 199–202 (TEYE) contribute to the substrate site.

The protein belongs to the class I-like SAM-binding methyltransferase superfamily. TrmB family.

The enzyme catalyses guanosine(46) in tRNA + S-adenosyl-L-methionine = N(7)-methylguanosine(46) in tRNA + S-adenosyl-L-homocysteine. The protein operates within tRNA modification; N(7)-methylguanine-tRNA biosynthesis. Catalyzes the formation of N(7)-methylguanine at position 46 (m7G46) in tRNA. This is tRNA (guanine-N(7)-)-methyltransferase from Leuconostoc mesenteroides subsp. mesenteroides (strain ATCC 8293 / DSM 20343 / BCRC 11652 / CCM 1803 / JCM 6124 / NCDO 523 / NBRC 100496 / NCIMB 8023 / NCTC 12954 / NRRL B-1118 / 37Y).